The chain runs to 1037 residues: Tyrosine-protein kinase-like otk (1037 aa).

Positions 1-22 (MAALRISVWILVQALMMALVSS) are cleaved as a signal peptide. 2 N-linked (GlcNAc...) asparagine glycosylation sites follow: N23 and N39. Topologically, residues 23–582 (NSSHFLQLPQ…GGDGFLVTRA (560 aa)) are extracellular. 5 consecutive Ig-like C2-type domains span residues 25–115 (SHFL…AKLS), 114–200 (LSVI…RVMS), 252–366 (PEDL…APIN), 369–464 (PGTL…VAIN), and 469–559 (PKFS…VQLV). Disulfide bonds link C46–C96, C138–C189, C277–C355, and C400–C448. N-linked (GlcNAc...) asparagine glycans are attached at residues N337, N418, N430, N445, N458, N513, and N525. C491 and C543 are oxidised to a cystine. Residues 583 to 603 (VLITMTVALAYIVLVVGLMLW) form a helical membrane-spanning segment. Residues 604-1037 (CRYRRQARKA…LSKAMQSLEK (434 aa)) are Cytoplasmic-facing. Disordered stretches follow at residues 618 to 681 (LSTK…KKSA) and 719 to 764 (ATGS…KTSM). Polar residues predominate over residues 653–675 (QSRSKSNGDAQKSDDTACSQQSR). S680 carries the phosphoserine modification. The region spanning 694-1035 (LTELIQIGRG…AALSKAMQSL (342 aa)) is the Protein kinase; inactive domain. Positions 724–735 (SDKDADTEKQHS) are enriched in basic and acidic residues.

Belongs to the protein kinase superfamily. Tyr protein kinase family. Insulin receptor subfamily. Interacts with plexA; component of a receptor complex that mediates the repulsive signaling in response to Semaphorin ligands.

It is found in the cell membrane. In terms of biological role, acts as a calcium-dependent, homophilic cell adhesion molecule that regulates neural recognition during the development of the nervous system. Component of the repulsive Plexin signaling response to regulate motor axon guidance at the embryonic stage. Also component of a receptor complex that is required in the adult visual system to innervate the lamina layer; specific targeting of R1-R6 axons. The protein is Tyrosine-protein kinase-like otk of Drosophila ananassae (Fruit fly).